Here is an 829-residue protein sequence, read N- to C-terminus: MSTNPKPQRKTKRNTNRRPQDVKFPGGGQIVGGVYLLPRRGPRLGVRATRKTSERSQPRGRRQPIPKARRPKGRNWAQPGYPWPLYGNEGCGWAGWLPSPRGSRPSWGPNDPRRRSRNLGKVIDTLTCGFVDLMGYIPLVGAPLRGAARALAHGVRVLEDGVNYATGNLPGCSFSIFLLALLSCLTVPASAYQVRNSTGLYHVTNDCPNSSIVYEAVDAILHTPGCVPCVREGNASRCWVAMTPTVATRDGRLPTTQLRRHIDLLVGSATLCSALYVGDLCGSVFLVGQLFTFSPRRHWTTQGCNCSIYPGHITGHRMAWDMMMNWSPTTALVVAQLLRIPQAILDMIAGAHWGVLAGMAYFSMVGNWAKVLAVLLLFAGVDAETHVTGGAAARSTLQLAGLFQPGAKQNVQLINTNGSWHVNRTALNCNDSLNTGWIAGLFYYHGFNSSGCSERLASCRSLTDFDQGWGPISYAGGGGPDHRPYCWHYPPKPCGIVPAKSVCGPVYCFTPSPVVVGTTDRSGAPTYSWGADDTDVFVLNNTRPPLGNWFGCTWMNSTGFTKVCGAPPCVIGGVGNNTLHCPTDCFRKHPEATYSRCGSGPWLTPRCLVDYPYRLWHYPCTINHSIFKVRMYVGGVEHRLDAACNWTRGERCDLEDRDRSELSPLLLSTTQWQVLPCSFTTLPALSTGLIHLHQNIVDVQYLYGVGSSIASWAIKWEYVVLLFLLLADARVCSCLWMMLLISQAEAALENLVVLNAASLAGTHGLVSFLVFFCFAWFLRGKWVPGAVYALYGMWPLLLLLLALPQRAYALDTEVAASCGGVVLVGLMAL.

An N-acetylserine; by host modification is found at serine 2. Positions 2–23 (STNPKPQRKTKRNTNRRPQDVK) are interaction with STAT1. Residues 2–58 (STNPKPQRKTKRNTNRRPQDVKFPGGGQIVGGVYLLPRRGPRLGVRATRKTSERSQP) are interaction with EIF2AK2/PKR. An interaction with DDX3X region spans residues 2 to 59 (STNPKPQRKTKRNTNRRPQDVKFPGGGQIVGGVYLLPRRGPRLGVRATRKTSERSQPR). The tract at residues 2 to 75 (STNPKPQRKT…PKARRPKGRN (74 aa)) is disordered. The Cytoplasmic segment spans residues 2–168 (STNPKPQRKT…EDGVNYATGN (167 aa)). 2 consecutive short sequence motifs (nuclear localization signal) follow at residues 5–13 (PKPQRKTKR) and 38–43 (PRRGPR). Over residues 7 to 16 (PQRKTKRNTN) the composition is skewed to basic residues. Positions 32 to 47 (GGVYLLPRRGPRLGVR) are enriched in low complexity. Serine 53 bears the Phosphoserine; by host mark. 2 consecutive short sequence motifs (nuclear localization signal) follow at residues 58–64 (PRGRRQP) and 66–71 (PKARRP). Basic residues predominate over residues 58 to 73 (PRGRRQPIPKARRPKG). The residue at position 99 (serine 99) is a Phosphoserine; by host. Residues 112–152 (PRRRSRNLGKVIDTLTCGFVDLMGYIPLVGAPLRGAARALA) are important for endoplasmic reticulum and mitochondrial localization. Serine 116 carries the post-translational modification Phosphoserine; by host PKA. Positions 122 to 173 (VIDTLTCGFVDLMGYIPLVGAPLRGAARALAHGVRVLEDGVNYATGNLPGCS) are interaction with APOA2. Positions 164–167 (YATG) are important for lipid droplets localization. Residues 169–189 (LPGCSFSIFLLALLSCLTVPA) form a helical membrane-spanning segment. Residues 178-191 (LLALLSCLTVPASA) constitute a propeptide, ER anchor for the core protein, removed in mature form by host signal peptidase. Residues 190–358 (SAYQVRNSTG…AGAHWGVLAG (169 aa)) are Lumenal-facing. Residues asparagine 196, asparagine 209, and asparagine 234 are each glycosylated (N-linked (GlcNAc...) asparagine; by host). The tract at residues 265-296 (LVGSATLCSALYVGDLCGSVFLVGQLFTFSPR) is important for fusion. Residue asparagine 305 is glycosylated (N-linked (GlcNAc...) asparagine; by host). Residues 359–379 (MAYFSMVGNWAKVLAVLLLFA) traverse the membrane as a helical segment. Topologically, residues 380–725 (GVDAETHVTG…WEYVVLLFLL (346 aa)) are lumenal. Residues 385 to 411 (THVTGGAAARSTLQLAGLFQPGAKQNV) form an HVR1 region. N-linked (GlcNAc...) (high mannose) asparagine; by host glycans are attached at residues asparagine 417, asparagine 423, asparagine 430, and asparagine 448. Disulfide bonds link cysteine 429–cysteine 552, cysteine 452–cysteine 459, cysteine 486–cysteine 494, and cysteine 503–cysteine 508. The segment at 474–479 (YAGGGG) is HVR2. Residues 480-493 (PDHRPYCWHYPPKP) are CD81-binding 1. N-linked (GlcNAc...) asparagine; by host glycosylation occurs at asparagine 540. The interval 544 to 551 (PPLGNWFG) is CD81-binding 2. Asparagine 556 carries an N-linked (GlcNAc...) (high mannose) asparagine; by host glycan. A disulfide bridge links cysteine 564 with cysteine 569. Residue asparagine 576 is glycosylated (N-linked (GlcNAc...) (high mannose) asparagine; by host). 3 disulfides stabilise this stretch: cysteine 581/cysteine 585, cysteine 597/cysteine 620, and cysteine 607/cysteine 644. N-linked (GlcNAc...) (high mannose) asparagine; by host glycans are attached at residues asparagine 623 and asparagine 645. A disulfide bridge connects residues cysteine 652 and cysteine 677. The segment at 660–671 (SELSPLLLSTTQ) is PKR/eIF2-alpha phosphorylation homology domain (PePHD). Residues 726 to 746 (LADARVCSCLWMMLLISQAEA) traverse the membrane as a helical segment. Residues 747–757 (ALENLVVLNAA) lie on the Lumenal side of the membrane. Residues 758–778 (SLAGTHGLVSFLVFFCFAWFL) form a helical membrane-spanning segment. At 779–781 (RGK) the chain is on the cytoplasmic side. Residues 782 to 803 (WVPGAVYALYGMWPLLLLLLAL) form a helical membrane-spanning segment. The Lumenal portion of the chain corresponds to 804 to 813 (PQRAYALDTE). A helical transmembrane segment spans residues 814-829 (VAASCGGVVLVGLMAL).

The protein belongs to the hepacivirus polyprotein family. As to quaternary structure, homooligomer. Interacts with E1 (via C-terminus). Interacts with the non-structural protein 5A. Interacts (via N-terminus) with host STAT1 (via SH2 domain); this interaction results in decreased STAT1 phosphorylation and ubiquitin-mediated proteasome-dependent STAT1 degradation, leading to decreased IFN-stimulated gene transcription. Interacts with host STAT3; this interaction constitutively activates STAT3. Interacts with host LTBR receptor. Interacts with host TNFRSF1A receptor and possibly induces apoptosis. Interacts with host HNRPK. Interacts with host YWHAE. Interacts with host UBE3A/E6AP. Interacts with host DDX3X. Interacts with host APOA2. Interacts with host RXRA protein. Interacts with host SP110 isoform 3/Sp110b; this interaction sequesters the transcriptional corepressor SP110 away from the nucleus. Interacts with host CREB3 nuclear transcription protein; this interaction triggers cell transformation. Interacts with host ACY3. Interacts with host C1QR1. Interacts with host RBM24; this interaction, which enhances the interaction of the mature core protein with 5'-UTR, may inhibit viral translation and favor replication. Interacts with host EIF2AK2/PKR; this interaction induces the autophosphorylation of EIF2AK2. Part of the viral assembly initiation complex composed of NS2, E1, E2, NS3, NS4A, NS5A and the mature core protein. In terms of assembly, forms a heterodimer with envelope glycoprotein E2. Interacts with mature core protein. Interacts with protease NS2. The heterodimer E1/E2 interacts with host CLDN1; this interaction plays a role in viral entry into host cell. Interacts with host SPSB2 (via C-terminus). Part of the viral assembly initiation complex composed of NS2, E1, E2, NS3, NS4A, NS5A and the mature core protein. Forms a heterodimer with envelope glycoprotein E1. Interacts with host CD81 and SCARB1 receptors; these interactions play a role in viral entry into host cell. Interacts with host EIF2AK2/PKR; this interaction inhibits EIF2AK2 and probably allows the virus to evade the innate immune response. Interacts with host CD209/DC-SIGN and CLEC4M/DC-SIGNR. Interact with host SPCS1; this interaction is essential for viral particle assembly. Interacts with protease NS2. The heterodimer E1/E2 interacts with host CLDN1; this interaction plays a role in viral entry into host cell. Part of the viral assembly initiation complex composed of NS2, E1, E2, NS3, NS4A, NS5A and the mature core protein. As to quaternary structure, homohexamer. Homoheptamer. Interacts with protease NS2. In terms of assembly, homodimer. Interacts with host SPCS1; this interaction is essential for viral particle assembly. Interacts with envelope glycoprotein E1. Interacts with envelope glycoprotein E2. Interacts with viroporin p7. Interacts with serine protease/helicase NS3. Part of the replication complex composed of NS2, NS3, NS4A, NS4B, NS5A and the RNA-directed RNA polymerase embedded in an ER-derived membranous web. Part of the viral assembly initiation complex composed of NS2, E1, E2, NS3, NS4A, NS5A and the mature core protein. Zn(2+) serves as cofactor. Specific enzymatic cleavages in vivo yield mature proteins. The structural proteins, core, E1, E2 and p7 are produced by proteolytic processing by host signal peptidases. The core protein precursor is synthesized as a 23 kDa, which is retained in the ER membrane through the hydrophobic signal peptide. Cleavage by the signal peptidase releases the 21 kDa mature core protein. The cleavage of the core protein precursor occurs between aminoacids 176 and 188 but the exact cleavage site is not known. Some degraded forms of the core protein appear as well during the course of infection. The other proteins (p7, NS2, NS3, NS4A, NS4B, NS5A and NS5B) are cleaved by the viral proteases. Autoprocessing between NS2 and NS3 is mediated by the NS2 cysteine protease catalytic domain and regulated by the NS3 N-terminal domain. Post-translationally, phosphorylated by host PKC and PKA. In terms of processing, ubiquitinated; mediated by UBE3A and leading to core protein subsequent proteasomal degradation. Highly N-glycosylated. Post-translationally, palmitoylation is required for NS2/3 autoprocessing and E2 recruitment to membranes.

The protein resides in the host endoplasmic reticulum membrane. The protein localises to the host mitochondrion membrane. It is found in the virion. It localises to the host cytoplasm. Its subcellular location is the host nucleus. The protein resides in the host lipid droplet. The protein localises to the virion membrane. It is found in the host mitochondrion. It localises to the host cell membrane. Inhibited by the antiviral drug hexamethylene amiloride. Inhibition by amantadine appears to be genotype-dependent. Also inhibited by long-alkyl-chain iminosugar derivatives. Packages viral RNA to form a viral nucleocapsid, and promotes virion budding. Participates in the viral particle production as a result of its interaction with the non-structural protein 5A. Binds RNA and may function as a RNA chaperone to induce the RNA structural rearrangements taking place during virus replication. Modulates viral translation initiation by interacting with viral IRES and 40S ribosomal subunit. Affects various cell signaling pathways, host immunity and lipid metabolism. Prevents the establishment of cellular antiviral state by blocking the interferon-alpha/beta (IFN-alpha/beta) and IFN-gamma signaling pathways and by blocking the formation of phosphorylated STAT1 and promoting ubiquitin-mediated proteasome-dependent degradation of STAT1. Activates STAT3 leading to cellular transformation. Regulates the activity of cellular genes, including c-myc and c-fos. May repress the promoter of p53, and sequester CREB3 and SP110 isoform 3/Sp110b in the cytoplasm. Represses cell cycle negative regulating factor CDKN1A, thereby interrupting an important check point of normal cell cycle regulation. Targets transcription factors involved in the regulation of inflammatory responses and in the immune response: suppresses TNF-induced NF-kappa-B activation, and activates AP-1. Binds to dendritic cells (DCs) via C1QR1, resulting in down-regulation of T-lymphocytes proliferation. Alters lipid metabolism by interacting with hepatocellular proteins involved in lipid accumulation and storage. Induces up-regulation of FAS promoter activity, and thereby contributes to the increased triglyceride accumulation in hepatocytes (steatosis). Its function is as follows. Forms a heterodimer with envelope glycoprotein E2, which mediates virus attachment to the host cell, virion internalization through clathrin-dependent endocytosis and fusion with host membrane. Fusion with the host cell is most likely mediated by both E1 and E2, through conformational rearrangements of the heterodimer required for fusion rather than a classical class II fusion mechanism. E1/E2 heterodimer binds host apolipoproteins such as APOB and ApoE thereby forming a lipo-viro-particle (LVP). APOE associated to the LVP allows the initial virus attachment to cell surface receptors such as the heparan sulfate proteoglycans (HSPGs), syndecan-1 (SDC1), syndecan-1 (SDC2), the low-density lipoprotein receptor (LDLR) and scavenger receptor class B type I (SCARB1). The cholesterol transfer activity of SCARB1 allows E2 exposure and binding of E2 to SCARB1 and the tetraspanin CD81. E1/E2 heterodimer binding on CD81 activates the epithelial growth factor receptor (EGFR) signaling pathway. Diffusion of the complex E1-E2-EGFR-SCARB1-CD81 to the cell lateral membrane allows further interaction with Claudin 1 (CLDN1) and occludin (OCLN) to finally trigger HCV entry. In terms of biological role, forms a heterodimer with envelope glycoprotein E1, which mediates virus attachment to the host cell, virion internalization through clathrin-dependent endocytosis and fusion with host membrane. Fusion with the host cell is most likely mediated by both E1 and E2, through conformational rearrangements of the heterodimer required for fusion rather than a classical class II fusion mechanism. The interaction between envelope glycoprotein E2 and host apolipoprotein E/APOE allows the proper assembly, maturation and infectivity of the viral particles. This interaction is probably promoted via the up-regulation of cellular autophagy by the virus. E1/E2 heterodimer binds host apolipoproteins such as APOB and APOE thereby forming a lipo-viro-particle (LVP). APOE associated to the LVP allows the initial virus attachment to cell surface receptors such as the heparan sulfate proteoglycans (HSPGs), syndecan-1 (SDC1), syndecan-1 (SDC2), the low-density lipoprotein receptor (LDLR) and scavenger receptor class B type I (SCARB1). The cholesterol transfer activity of SCARB1 allows E2 exposure and binding of E2 to SCARB1 and the tetraspanin CD81. E1/E2 heterodimer binding on CD81 activates the epithelial growth factor receptor (EGFR) signaling pathway. Diffusion of the complex E1-E2-EGFR-SCARB1-CD81 to the cell lateral membrane allows further interaction with Claudin 1 (CLDN1) and occludin (OCLN) to finally trigger HCV entry. Inhibits host EIF2AK2/PKR activation, preventing the establishment of an antiviral state. Viral ligand for CD209/DC-SIGN and CLEC4M/DC-SIGNR, which are respectively found on dendritic cells (DCs), and on liver sinusoidal endothelial cells and macrophage-like cells of lymph node sinuses. These interactions allow the capture of circulating HCV particles by these cells and subsequent facilitated transmission to permissive cells such as hepatocytes and lymphocyte subpopulations. Functionally, ion channel protein that acts as a viroporin and plays an essential role in the assembly, envelopment and secretion of viral particles. Regulates the host cell secretory pathway, which induces the intracellular retention of viral glycoproteins and favors assembly of viral particles. Creates a pore in acidic organelles and releases Ca(2+) and H(+) in the cytoplasm of infected cells, leading to a productive viral infection. High levels of cytoplasmic Ca(2+) may trigger membrane trafficking and transport of viral ER-associated proteins to viroplasms, sites of viral genome replication. This ionic imbalance induces the assembly of the inflammasome complex, which triggers the maturation of pro-IL-1beta into IL-1beta through the action of caspase-1. Targets also host mitochondria and induces mitochondrial depolarization. In addition of its role as a viroporin, acts as a lipid raft adhesion factor. Cysteine protease required for the proteolytic auto-cleavage between the non-structural proteins NS2 and NS3. The N-terminus of NS3 is required for the function of NS2 protease (active region NS2-3). Promotes the initiation of viral particle assembly by mediating the interaction between structural and non-structural proteins. This is Genome polyprotein from Hepatitis C virus (isolate Glasgow) (HCV).